The sequence spans 394 residues: tRNA-specific adenosine deaminase 1 (394 aa).

Positions 54–388 (SLGCGTKCIG…TKKPHELLDF (335 aa)) constitute an A to I editase domain. Position 78 (histidine 78) interacts with Zn(2+). Glutamate 80 acts as the Proton donor in catalysis. 1D-myo-inositol hexakisphosphate contacts are provided by arginine 84 and arginine 85. Positions 127 and 191 each coordinate Zn(2+). Residues lysine 194, arginine 197, lysine 320, lysine 357, and lysine 381 each contribute to the 1D-myo-inositol hexakisphosphate site.

It belongs to the ADAT1 family. It depends on 1D-myo-inositol hexakisphosphate as a cofactor. As to expression, widely expressed in early embryos, and later concentrates in the central nervous system.

It carries out the reaction adenosine(37) in tRNA(Ala) + H2O + H(+) = inosine(37) in tRNA(Ala) + NH4(+). Functionally, specifically deaminates adenosine-37 to inosine in tRNA-Ala. This is tRNA-specific adenosine deaminase 1 from Drosophila melanogaster (Fruit fly).